The primary structure comprises 126 residues: MLKKLIMGFFLLILLGIAGVAVMNYYYEANYDKELVAYDEGVFNDRVHFTSELLGPGTYRIIAGGTGIVEDIEIIDRSGNVVAKHEDTTNLLYGSSNSFVVRVNYAPPNPGEEYEATIEIYRYVEK.

The N-terminal stretch at M1 to M23 is a signal peptide.

This is an uncharacterized protein from Archaeoglobus fulgidus (strain ATCC 49558 / DSM 4304 / JCM 9628 / NBRC 100126 / VC-16).